The following is a 437-amino-acid chain: Protein arginine methyltransferase NDUFAF7 homolog, mitochondrial (437 aa).

Residues 21–49 (RPNLGATGTPKMEPPKEQPEASSKAESGH) form a disordered region.

It belongs to the NDUFAF7 family.

Its subcellular location is the mitochondrion. The catalysed reaction is L-arginyl-[protein] + 2 S-adenosyl-L-methionine = N(omega),N(omega)'-dimethyl-L-arginyl-[protein] + 2 S-adenosyl-L-homocysteine + 2 H(+). Functionally, arginine methyltransferase involved in the assembly or stability of mitochondrial NADH:ubiquinone oxidoreductase complex (complex I). This is Protein arginine methyltransferase NDUFAF7 homolog, mitochondrial from Drosophila melanogaster (Fruit fly).